We begin with the raw amino-acid sequence, 168 residues long: Small ribosomal subunit protein uS5 (168 aa).

An S5 DRBM domain is found at 17–80 (IEDQLVAVNR…EDGKKKMINV (64 aa)).

This sequence belongs to the universal ribosomal protein uS5 family. Part of the 30S ribosomal subunit. Contacts proteins S4 and S8.

In terms of biological role, with S4 and S12 plays an important role in translational accuracy. Its function is as follows. Located at the back of the 30S subunit body where it stabilizes the conformation of the head with respect to the body. The polypeptide is Small ribosomal subunit protein uS5 (Lactobacillus helveticus (strain DPC 4571)).